Reading from the N-terminus, the 156-residue chain is SsrA-binding protein (156 aa).

It belongs to the SmpB family.

It is found in the cytoplasm. Required for rescue of stalled ribosomes mediated by trans-translation. Binds to transfer-messenger RNA (tmRNA), required for stable association of tmRNA with ribosomes. tmRNA and SmpB together mimic tRNA shape, replacing the anticodon stem-loop with SmpB. tmRNA is encoded by the ssrA gene; the 2 termini fold to resemble tRNA(Ala) and it encodes a 'tag peptide', a short internal open reading frame. During trans-translation Ala-aminoacylated tmRNA acts like a tRNA, entering the A-site of stalled ribosomes, displacing the stalled mRNA. The ribosome then switches to translate the ORF on the tmRNA; the nascent peptide is terminated with the 'tag peptide' encoded by the tmRNA and targeted for degradation. The ribosome is freed to recommence translation, which seems to be the essential function of trans-translation. This Bacillus pumilus (strain SAFR-032) protein is SsrA-binding protein.